The following is a 285-amino-acid chain: MARCO-like protein (285 aa).

An N-terminal signal peptide occupies residues methionine 1–threonine 20. An N-linked (GlcNAc...) asparagine glycan is attached at asparagine 24. Disordered regions lie at residues asparagine 47 to glycine 77 and glycine 91 to leucine 285. Composition is skewed to polar residues over residues lysine 57–proline 67 and serine 105–proline 114. Residues glutamate 115–glutamine 128 are compositionally biased toward low complexity. Positions isoleucine 134–aspartate 145 are enriched in polar residues. Positions glycine 160 to glutamine 173 are enriched in low complexity. Positions histidine 174 to asparagine 185 are enriched in polar residues. Positions leucine 186–glycine 220 are enriched in low complexity. A compositionally biased stretch (polar residues) spans asparagine 221–leucine 285.

The polypeptide is MARCO-like protein (Homo sapiens (Human)).